A 332-amino-acid polypeptide reads, in one-letter code: Fructose-1,6-bisphosphatase class 1 (332 aa).

Mg(2+) is bound by residues glutamate 89, aspartate 110, leucine 112, and aspartate 113. Substrate is bound by residues 113–116 (DGSS), asparagine 206, tyrosine 239, 257–259 (YLY), and lysine 269. Residue glutamate 275 participates in Mg(2+) binding.

This sequence belongs to the FBPase class 1 family. As to quaternary structure, homotetramer. Mg(2+) serves as cofactor.

It localises to the cytoplasm. It catalyses the reaction beta-D-fructose 1,6-bisphosphate + H2O = beta-D-fructose 6-phosphate + phosphate. Its pathway is carbohydrate biosynthesis; gluconeogenesis. This Erwinia tasmaniensis (strain DSM 17950 / CFBP 7177 / CIP 109463 / NCPPB 4357 / Et1/99) protein is Fructose-1,6-bisphosphatase class 1.